Here is a 334-residue protein sequence, read N- to C-terminus: Probable prephenate dehydratase (334 aa).

In terms of domain architecture, Prephenate dehydratase spans 7 to 224; it reads RVLFLGPKGT…NTTRFLVLKR (218 aa). Positions 244–322 constitute an ACT domain; the sequence is LTFTTRQDDP…SDKSKQWCLW (79 aa).

The protein resides in the cytoplasm. It catalyses the reaction prephenate + H(+) = 3-phenylpyruvate + CO2 + H2O. The protein operates within amino-acid biosynthesis; L-phenylalanine biosynthesis; phenylpyruvate from prephenate: step 1/1. Catayzes the decarboxylation/dehydration of prephenate to phenylpyruvate. This Saccharomyces cerevisiae (strain ATCC 204508 / S288c) (Baker's yeast) protein is Probable prephenate dehydratase (PHA2).